The sequence spans 288 residues: Protease HtpX homolog (288 aa).

2 consecutive transmembrane segments (helical) span residues 6 to 26 (TAFL…YVGG) and 28 to 48 (QGMM…YFFS). Histidine 130 lines the Zn(2+) pocket. Glutamate 131 is a catalytic residue. Residue histidine 134 coordinates Zn(2+). 2 consecutive transmembrane segments (helical) span residues 140–160 (ILTG…ANFA) and 179–199 (VIML…QMAI). Zn(2+) is bound at residue glutamate 204.

The protein belongs to the peptidase M48B family. Requires Zn(2+) as cofactor.

The protein localises to the cell inner membrane. This is Protease HtpX homolog from Campylobacter concisus (strain 13826).